A 624-amino-acid polypeptide reads, in one-letter code: Glutamine--fructose-6-phosphate aminotransferase [isomerizing] (624 aa).

C2 functions as the Nucleophile; for GATase activity in the catalytic mechanism. The 224-residue stretch at 2–225 folds into the Glutamine amidotransferase type-2 domain; sequence CGIVGYVGRR…QDQAVVITAD (224 aa). SIS domains lie at 297-436 and 469-614; these read SDQE…ARGT and LAHR…VDKP. K619 (for Fru-6P isomerization activity) is an active-site residue.

As to quaternary structure, homodimer.

The protein resides in the cytoplasm. The enzyme catalyses D-fructose 6-phosphate + L-glutamine = D-glucosamine 6-phosphate + L-glutamate. Catalyzes the first step in hexosamine metabolism, converting fructose-6P into glucosamine-6P using glutamine as a nitrogen source. This Mycobacterium bovis (strain ATCC BAA-935 / AF2122/97) protein is Glutamine--fructose-6-phosphate aminotransferase [isomerizing].